A 224-amino-acid chain; its full sequence is N6-methyladenosine RNA demethylase ALKBH (224 aa).

Positions Leu-93–Arg-222 constitute a Fe2OG dioxygenase domain. Fe cation-binding residues include His-111, Asp-113, and His-178. Residue Arg-213 participates in 2-oxoglutarate binding.

It belongs to the alkB family. Fe(2+) is required as a cofactor.

The enzyme catalyses an N(6)-methyladenosine in mRNA + 2-oxoglutarate + O2 = an adenosine in mRNA + formaldehyde + succinate + CO2. In terms of biological role, RNA demethylase that regulates the stability of mRNAs through an m(6)A-dependent manner. M6A is a modification present at internal sites of mRNAs and some non-coding RNAs and plays a role in mRNA stability and processing. Demethylate m6A at position A1935 within the 3'UTR of transcription factor ZAP1 and plays an important role in C.parasitica development and virulence. Target mRNAs are primarily associated with amino-acid biosynthesis, 2-oxocarboxylic acid metabolism, and ABC transporters, as well as alpha-amino acid metabolism, small-molecule biosynthesis, and the sulfite reductase complex (NADPH). This Cryphonectria parasitica (strain ATCC 38755 / EP155) protein is N6-methyladenosine RNA demethylase ALKBH.